The primary structure comprises 1162 residues: DNA-directed RNA polymerase subunit beta 1 (1162 aa).

This sequence belongs to the RNA polymerase beta chain family. As to quaternary structure, the RNAP catalytic core consists of 2 alpha, 1 beta, 1 beta' and 1 omega subunit. When a sigma factor is associated with the core the holoenzyme is formed, which can initiate transcription.

It carries out the reaction RNA(n) + a ribonucleoside 5'-triphosphate = RNA(n+1) + diphosphate. Its function is as follows. DNA-dependent RNA polymerase catalyzes the transcription of DNA into RNA using the four ribonucleoside triphosphates as substrates. This Nocardia farcinica (strain IFM 10152) protein is DNA-directed RNA polymerase subunit beta 1.